Consider the following 612-residue polypeptide: FAD-linked oxidoreductase easE (612 aa).

Positions 129–313 constitute an FAD-binding PCMH-type domain; the sequence is HQGRIPLYSA…TRATMRVFPD (185 aa).

Belongs to the oxygen-dependent FAD-linked oxidoreductase family. FAD serves as cofactor.

It participates in alkaloid biosynthesis; ergot alkaloid biosynthesis. FAD-linked oxidoreductase; part of the gene cluster that mediates the biosynthesis of fungal ergot alkaloid. DmaW catalyzes the first step of ergot alkaloid biosynthesis by condensing dimethylallyl diphosphate (DMAP) and tryptophan to form 4-dimethylallyl-L-tryptophan. The second step is catalyzed by the methyltransferase easF that methylates 4-dimethylallyl-L-tryptophan in the presence of S-adenosyl-L-methionine, resulting in the formation of 4-dimethylallyl-L-abrine. The catalase easC and the FAD-dependent oxidoreductase easE then transform 4-dimethylallyl-L-abrine to chanoclavine-I which is further oxidized by easD in the presence of NAD(+), resulting in the formation of chanoclavine-I aldehyde. Chanoclavine-I aldehyde is the precursor of ergoamides and ergopeptines in Clavicipitaceae, and clavine-type alcaloids such as fumiclavine in Trichocomaceae. However, the metabolites downstream of chanoclavine-I aldehyde in Arthrodermataceae have not been identified yet. This chain is FAD-linked oxidoreductase easE, found in Arthroderma otae (strain ATCC MYA-4605 / CBS 113480) (Microsporum canis).